The primary structure comprises 187 residues: NADH-quinone oxidoreductase subunit B (187 aa).

[4Fe-4S] cluster-binding residues include cysteine 66, cysteine 67, cysteine 131, and cysteine 161.

Belongs to the complex I 20 kDa subunit family. As to quaternary structure, NDH-1 is composed of 14 different subunits. Subunits NuoB, C, D, E, F, and G constitute the peripheral sector of the complex. Requires [4Fe-4S] cluster as cofactor.

It localises to the cell inner membrane. The enzyme catalyses a quinone + NADH + 5 H(+)(in) = a quinol + NAD(+) + 4 H(+)(out). In terms of biological role, NDH-1 shuttles electrons from NADH, via FMN and iron-sulfur (Fe-S) centers, to quinones in the respiratory chain. The immediate electron acceptor for the enzyme in this species is believed to be ubiquinone. Couples the redox reaction to proton translocation (for every two electrons transferred, four hydrogen ions are translocated across the cytoplasmic membrane), and thus conserves the redox energy in a proton gradient. The chain is NADH-quinone oxidoreductase subunit B from Methylocella silvestris (strain DSM 15510 / CIP 108128 / LMG 27833 / NCIMB 13906 / BL2).